The sequence spans 1158 residues: Voltage-gated inwardly rectifying potassium channel KCNH2 (1158 aa).

The Cytoplasmic portion of the chain corresponds to 1–402 (MPVRRGHVAP…RIHRWTILHY (402 aa)). The region spanning 17–88 (TIIRKFEGQS…AAQIAQALLG (72 aa)) is the PAS domain. Residues 92–144 (RKVEIAFYRKDGSCFLCLVDVVPVKNEDGAVIMFILNFEVVMEKDMVGSPTHD) enclose the PAC domain. Positions 232–314 (RALVGSSSPP…GAMHPLRGGL (83 aa)) are disordered. Ser239 bears the Phosphoserine mark. The span at 258 to 269 (PDASGSSCSLAR) shows a compositional bias: polar residues. Phosphoserine occurs at positions 283, 284, 319, and 350. Residues 403–423 (SPFKAVWDWLILLLVIYTAVF) traverse the membrane as a helical segment. Topologically, residues 424 to 449 (TPYSAAFLLKETEEGPPAPDCGYACQ) are extracellular. The helical transmembrane segment at 450 to 470 (PLAVVDFIVDIMFIVDILINF) threads the bilayer. The Cytoplasmic portion of the chain corresponds to 471–494 (RTTYVNANEEVVSHPGRIAVHYFK). A helical transmembrane segment spans residues 495-515 (GWFLIDMVAAIPFDLLIFGSG). Residues 516–519 (SEEL) are Extracellular-facing. The helical; Voltage-sensor transmembrane segment at 520–540 (IGLLKTARLLRLVRVARKLDR) threads the bilayer. At 541–546 (YSEYGA) the chain is on the cytoplasmic side. A helical membrane pass occupies residues 547 to 567 (AVLFLLMCTFALIAHWLACIW). The Extracellular portion of the chain corresponds to 568–610 (YAIGNMEQPHMDSRIGWLHNLGDQIGKPYNSSGLGGPSIKDKY). A glycan (N-linked (GlcNAc...) asparagine) is linked at Asn597. The segment at residues 611-631 (VTALYFTFSSLTSVGFGNVSP) is an intramembrane region (pore-forming). The Selectivity filter motif lies at 623 to 628 (SVGFGN). Residues 632–637 (NTNSEK) lie on the Extracellular side of the membrane. The helical transmembrane segment at 638 to 658 (IFSICVMLIGSLMYASIFGNV) threads the bilayer. Residues 659 to 1158 (SAIIQRLYSG…LHRHGSDPGS (500 aa)) are Cytoplasmic-facing. Positions 741-841 (PFRGATKGCL…IHRDDLLEVL (101 aa)) are cNMP-binding domain. The disordered stretch occupies residues 869–987 (GSPGSAELEG…KSSDTCNPLS (119 aa)). Phosphoserine occurs at positions 870 and 873. A compositionally biased stretch (basic residues) spans 882 to 891 (RQRKRKLSFR). Gly residues predominate over residues 910–926 (GRAGAGPSGRGRPGGPW). Positions 927 to 938 (GESPSSGPSSPE) are enriched in low complexity. The span at 959-969 (SPRPPGEPPGG) shows a compositional bias: pro residues. Residue Arg1013 is modified to Omega-N-methylarginine. Positions 1034–1061 (RGDVEGRLDALQRQLNRLETRLSADMAT) form a coiled coil. The tract at residues 1116–1158 (FEELPPGAPELPQDGPPRRLSLPGQLGALTSQPLHRHGSDPGS) is disordered. Ser1136 carries the post-translational modification Phosphoserine.

This sequence belongs to the potassium channel family. H (Eag) (TC 1.A.1.20) subfamily. Kv11.1/KCNH2 sub-subfamily. In terms of assembly, the potassium channel is probably composed of a homo- or heterotetrameric complex of pore-forming alpha subunits that can associate with modulating beta subunits. Interacts with DNAJB12 and DNAJB14; chaperones DNAJB12 and DNAJB14 promote tetramerization. Heteromultimer with KCNH6/ERG2 and KCNH7/ERG3. Interacts with ALG10B. Forms a stable complex with KCNE1 or KCNE2, and that this heteromultimerization regulates Inward rectifier potassium channel activity. Interacts with CANX. The core-glycosylated, but not the fully glycosylated form interacts with RNF207. Interacts with NDFIP1 and NDFIP2; this interaction decreases the cell membrane expression by targeting KCNH2, through interaction with NEDD4L, for the degradation through the multivesicular bodies (MVBs)-lysosomal pathway. Post-translationally, phosphorylated on serine and threonine residues. Phosphorylation by PKA inhibits ion conduction. In terms of tissue distribution, highly expressed in left and right atria of the heart, in cortex and hippocampus; detected at intermediate levels in left and right ventricle, Purkinje fibers, cerebellum, thalamus and basal ganglia; detected at low levels in liver, spleen and kidney.

The protein resides in the cell membrane. It carries out the reaction K(+)(in) = K(+)(out). Its function is as follows. Pore-forming (alpha) subunit of voltage-gated inwardly rectifying potassium channel. Characterized by unusual gating kinetics by producing relatively small outward currents during membrane depolarization and large inward currents during subsequent repolarization which reflect a rapid inactivation during depolarization and quick recovery from inactivation but slow deactivation (closing) during repolarization. Channel properties are modulated by cAMP and subunit assembly. Forms a stable complex with KCNE1 or KCNE2, and that this heteromultimerization regulates inward rectifier potassium channel activity. This chain is Voltage-gated inwardly rectifying potassium channel KCNH2, found in Canis lupus familiaris (Dog).